Reading from the N-terminus, the 433-residue chain is NADH-quinone oxidoreductase subunit D (433 aa).

It belongs to the complex I 49 kDa subunit family. In terms of assembly, NDH-1 is composed of 14 different subunits. Subunits NuoB, C, D, E, F, and G constitute the peripheral sector of the complex.

It localises to the cell membrane. The enzyme catalyses a quinone + NADH + 5 H(+)(in) = a quinol + NAD(+) + 4 H(+)(out). NDH-1 shuttles electrons from NADH, via FMN and iron-sulfur (Fe-S) centers, to quinones in the respiratory chain. The immediate electron acceptor for the enzyme in this species is believed to be a menaquinone. Couples the redox reaction to proton translocation (for every two electrons transferred, four hydrogen ions are translocated across the cytoplasmic membrane), and thus conserves the redox energy in a proton gradient. This Cutibacterium acnes (strain DSM 16379 / KPA171202) (Propionibacterium acnes) protein is NADH-quinone oxidoreductase subunit D.